Consider the following 568-residue polypeptide: Urease subunit alpha (568 aa).

The Urease domain occupies 131–568; it reads GGMDAHIHFI…LPLAQRYFLY (438 aa). His-136, His-138, and Lys-219 together coordinate Ni(2+). The residue at position 219 (Lys-219) is an N6-carboxylysine. His-221 is a binding site for substrate. 2 residues coordinate Ni(2+): His-248 and His-274. His-322 serves as the catalytic Proton donor. Asp-362 provides a ligand contact to Ni(2+).

It belongs to the metallo-dependent hydrolases superfamily. Urease alpha subunit family. As to quaternary structure, heterotrimer of UreA (gamma), UreB (beta) and UreC (alpha) subunits. Three heterotrimers associate to form the active enzyme. Requires Ni cation as cofactor. In terms of processing, carboxylation allows a single lysine to coordinate two nickel ions.

The protein localises to the cytoplasm. It catalyses the reaction urea + 2 H2O + H(+) = hydrogencarbonate + 2 NH4(+). The protein operates within nitrogen metabolism; urea degradation; CO(2) and NH(3) from urea (urease route): step 1/1. The chain is Urease subunit alpha from Cereibacter sphaeroides (strain ATCC 17025 / ATH 2.4.3) (Rhodobacter sphaeroides).